The chain runs to 445 residues: Tubulin beta-4B chain (445 aa).

Residues 1–4 carry the MREI motif motif; sequence MREI. Residue Q11 coordinates GTP. T55 carries the post-translational modification Phosphothreonine. K58 bears the N6-acetyllysine mark. Residues E69, S138, G142, T143, and G144 each contribute to the GTP site. E69 is a Mg(2+) binding site. Residue S172 is modified to Phosphoserine; by CDK1. GTP is bound by residues N204 and N226. A disordered region spans residues 426-445; the sequence is QDATAEEEGEFEEEAEEEVA. Positions 429-445 are enriched in acidic residues; the sequence is TAEEEGEFEEEAEEEVA. E438 carries the 5-glutamyl polyglutamate modification.

This sequence belongs to the tubulin family. In terms of assembly, dimer of alpha and beta chains. A typical microtubule is a hollow water-filled tube with an outer diameter of 25 nm and an inner diameter of 15 nM. Alpha-beta heterodimers associate head-to-tail to form protofilaments running lengthwise along the microtubule wall with the beta-tubulin subunit facing the microtubule plus end conferring a structural polarity. Microtubules usually have 13 protofilaments but different protofilament numbers can be found in some organisms and specialized cells. Component of sperm flagellar doublet microtubules. The cofactor is Mg(2+). In terms of processing, some glutamate residues at the C-terminus are polyglycylated, resulting in polyglycine chains on the gamma-carboxyl group. Glycylation is mainly limited to tubulin incorporated into axonemes (cilia and flagella) whereas glutamylation is prevalent in neuronal cells, centrioles, axonemes, and the mitotic spindle. Both modifications can coexist on the same protein on adjacent residues, and lowering polyglycylation levels increases polyglutamylation, and reciprocally. Cilia and flagella glycylation is required for their stability and maintenance. Flagella glycylation controls sperm motility. Post-translationally, some glutamate residues at the C-terminus are polyglutamylated, resulting in polyglutamate chains on the gamma-carboxyl group. Polyglutamylation plays a key role in microtubule severing by spastin (SPAST). SPAST preferentially recognizes and acts on microtubules decorated with short polyglutamate tails: severing activity by SPAST increases as the number of glutamates per tubulin rises from one to eight, but decreases beyond this glutamylation threshold. Glutamylation is also involved in cilia motility. Phosphorylated on Ser-172 by CDK1 during the cell cycle, from metaphase to telophase, but not in interphase. This phosphorylation inhibits tubulin incorporation into microtubules.

It is found in the cytoplasm. Its subcellular location is the cytoskeleton. The protein resides in the flagellum axoneme. Tubulin is the major constituent of microtubules, a cylinder consisting of laterally associated linear protofilaments composed of alpha- and beta-tubulin heterodimers. Microtubules grow by the addition of GTP-tubulin dimers to the microtubule end, where a stabilizing cap forms. Below the cap, tubulin dimers are in GDP-bound state, owing to GTPase activity of alpha-tubulin. In Rattus norvegicus (Rat), this protein is Tubulin beta-4B chain (Tubb4b).